We begin with the raw amino-acid sequence, 149 residues long: Calmodulin (149 aa).

An N-acetylalanine modification is found at alanine 2. EF-hand domains follow at residues 8-43 (EQIA…LGQN), 44-79 (PTEA…KMKD), 81-116 (DTEE…LGEK), and 117-149 (LTDE…MMAK). The Ca(2+) site is built by aspartate 21, aspartate 23, aspartate 25, threonine 27, glutamate 32, aspartate 57, aspartate 59, asparagine 61, threonine 63, glutamate 68, aspartate 94, aspartate 96, asparagine 98, and glutamate 105. N6,N6,N6-trimethyllysine is present on lysine 116. Residues aspartate 130, aspartate 132, aspartate 134, glutamine 136, and glutamate 141 each contribute to the Ca(2+) site.

Belongs to the calmodulin family.

In terms of biological role, calmodulin mediates the control of a large number of enzymes, ion channels and other proteins by Ca(2+). Among the enzymes to be stimulated by the calmodulin-Ca(2+) complex are a number of protein kinases and phosphatases. This Karlodinium veneficum (Dinoflagellate) protein is Calmodulin.